A 132-amino-acid polypeptide reads, in one-letter code: Small ribosomal subunit protein uS11 (132 aa).

This sequence belongs to the universal ribosomal protein uS11 family. Part of the 30S ribosomal subunit. Interacts with proteins S7 and S18. Binds to IF-3.

Functionally, located on the platform of the 30S subunit, it bridges several disparate RNA helices of the 16S rRNA. Forms part of the Shine-Dalgarno cleft in the 70S ribosome. In Cyanothece sp. (strain PCC 7425 / ATCC 29141), this protein is Small ribosomal subunit protein uS11.